The primary structure comprises 124 residues: Small ribosomal subunit protein uS12c (124 aa).

Residues 104-124 (SGGVKDRTQRRSKYGVKKPKS) are disordered. The segment covering 113–124 (RRSKYGVKKPKS) has biased composition (basic residues).

It belongs to the universal ribosomal protein uS12 family. Part of the 30S ribosomal subunit.

It is found in the plastid. Its subcellular location is the chloroplast. Functionally, with S4 and S5 plays an important role in translational accuracy. Located at the interface of the 30S and 50S subunits. This Thalassiosira pseudonana (Marine diatom) protein is Small ribosomal subunit protein uS12c (rps12).